The chain runs to 133 residues: MAANDTIADMLTRIRNANLARHQTTQVPATKMTRSIAKVLREEGFIAEIEEAEEGVKHNLVISLKYKGKNRQPLITALKRVSKPGLRVYSNRKELPRVLGGIGIAIISTSSGIMTDREARRQNLGGEVLCYVW.

It belongs to the universal ribosomal protein uS8 family. In terms of assembly, part of the 30S ribosomal subunit. Contacts proteins S5 and S12.

Functionally, one of the primary rRNA binding proteins, it binds directly to 16S rRNA central domain where it helps coordinate assembly of the platform of the 30S subunit. This chain is Small ribosomal subunit protein uS8, found in Nostoc punctiforme (strain ATCC 29133 / PCC 73102).